The sequence spans 180 residues: Large ribosomal subunit protein uL6 (180 aa).

The tract at residues 158–180 (YSGKGISYKGEKIRRKEGKTASK) is disordered.

The protein belongs to the universal ribosomal protein uL6 family. In terms of assembly, part of the 50S ribosomal subunit.

Functionally, this protein binds to the 23S rRNA, and is important in its secondary structure. It is located near the subunit interface in the base of the L7/L12 stalk, and near the tRNA binding site of the peptidyltransferase center. The protein is Large ribosomal subunit protein uL6 of Mycoplasmopsis synoviae (strain 53) (Mycoplasma synoviae).